The following is a 143-amino-acid chain: uncharacterized protein (143 aa).

The region spanning Asp-5–Ala-137 is the HTH marR-type domain. The H-T-H motif DNA-binding region spans Pro-51 to Asp-74.

As to quaternary structure, homodimer.

This is an uncharacterized protein from Mycobacterium bovis (strain ATCC BAA-935 / AF2122/97).